A 428-amino-acid polypeptide reads, in one-letter code: Peptidase B (428 aa).

The Mn(2+) site is built by K195 and D200. Residue K207 is part of the active site. Mn(2+)-binding residues include D218, D277, and E279. Residue R281 is part of the active site.

The protein belongs to the peptidase M17 family. In terms of assembly, homohexamer. The cofactor is Mn(2+).

The protein localises to the cytoplasm. It carries out the reaction Release of an N-terminal amino acid, Xaa, from a peptide or arylamide. Xaa is preferably Glu or Asp but may be other amino acids, including Leu, Met, His, Cys and Gln.. Its function is as follows. Probably plays an important role in intracellular peptide degradation. This is Peptidase B from Klebsiella pneumoniae subsp. pneumoniae (strain ATCC 700721 / MGH 78578).